Consider the following 334-residue polypeptide: Cyclin N-terminal domain-containing protein 1 (334 aa).

The Cyclin N-terminal domain maps to 29-180 (NALLHLAQQN…ILKSLNFQIN (152 aa)).

As to quaternary structure, interacts with PRR19; this interaction promotes crossover formation. Interacts with RFC3 and RFC4; these interactions facilitate crossover formation. Interacts with CDC34; this interaction regulates the cell-cycle progression. In terms of tissue distribution, isoform 2 is expressed in spermatocyte.

The protein localises to the nucleus. The protein resides in the cytoplasm. Its subcellular location is the chromosome. Plays a role in the different steps of crossover formation during meiotic recombination. Participates in the crossover differentiation step of crossover-specific recombination intermediates through its interaction with PRR19. In addition, stimulates crossover formation through the interactions with RFC3 and RFC4 and simultaneously regulates cell-cycle progression through interactions with CDC34 and subsequent ubiquitination of WEE1. May also participates in an active deselection process that destabilizes or removes excess pre-CO intermediates. The sequence is that of Cyclin N-terminal domain-containing protein 1 from Mus musculus (Mouse).